The following is a 604-amino-acid chain: Glutamine--fructose-6-phosphate aminotransferase [isomerizing] (604 aa).

The active-site Nucleophile; for GATase activity is the cysteine 2. The 218-residue stretch at 2–219 folds into the Glutamine amidotransferase type-2 domain; sequence CGIMGAVSER…EGDSACVTTQ (218 aa). SIS domains lie at 279–427 and 454–594; these read LRAS…DNRA and LASL…VDQP. Lysine 599 acts as the For Fru-6P isomerization activity in catalysis.

As to quaternary structure, homodimer.

It is found in the cytoplasm. The catalysed reaction is D-fructose 6-phosphate + L-glutamine = D-glucosamine 6-phosphate + L-glutamate. Functionally, catalyzes the first step in hexosamine metabolism, converting fructose-6P into glucosamine-6P using glutamine as a nitrogen source. The polypeptide is Glutamine--fructose-6-phosphate aminotransferase [isomerizing] (Legionella pneumophila subsp. pneumophila (strain Philadelphia 1 / ATCC 33152 / DSM 7513)).